We begin with the raw amino-acid sequence, 425 residues long: Phosphomethylpyrimidine synthase (425 aa).

Substrate-binding positions include M94, Y123, H162, 184–186 (SRG), 225–228 (NGMR), and E264. H268 is a binding site for Zn(2+). A substrate-binding site is contributed by Y291. H332 is a binding site for Zn(2+). Residues C407, C410, and C414 each contribute to the [4Fe-4S] cluster site.

Belongs to the ThiC family. It depends on [4Fe-4S] cluster as a cofactor.

It carries out the reaction 5-amino-1-(5-phospho-beta-D-ribosyl)imidazole + S-adenosyl-L-methionine = 4-amino-2-methyl-5-(phosphooxymethyl)pyrimidine + CO + 5'-deoxyadenosine + formate + L-methionine + 3 H(+). Its pathway is cofactor biosynthesis; thiamine diphosphate biosynthesis. Catalyzes the synthesis of the hydroxymethylpyrimidine phosphate (HMP-P) moiety of thiamine from aminoimidazole ribotide (AIR) in a radical S-adenosyl-L-methionine (SAM)-dependent reaction. The chain is Phosphomethylpyrimidine synthase from Methanoregula boonei (strain DSM 21154 / JCM 14090 / 6A8).